The primary structure comprises 312 residues: Ubiquinone biosynthesis O-methyltransferase, mitochondrial (312 aa).

The N-terminal 32 residues, 1–32 (MLLRSRFLKVIHVRKQLSACSRFAIQTQTRCK), are a transit peptide targeting the mitochondrion. S-adenosyl-L-methionine contacts are provided by Arg68, Gly130, Asp153, and Met196. Positions 197, 200, and 201 each coordinate Mg(2+).

It belongs to the class I-like SAM-binding methyltransferase superfamily. UbiG/COQ3 family. As to quaternary structure, component of a multi-subunit COQ enzyme complex, composed of at least COQ3, COQ4, COQ5, COQ6, COQ7 and COQ9. Interacts directly with COQ4. Mg(2+) serves as cofactor.

The protein localises to the mitochondrion inner membrane. The catalysed reaction is 3,4-dihydroxy-5-(all-trans-hexaprenyl)benzoate + S-adenosyl-L-methionine = 4-hydroxy-3-methoxy-5-(all-trans-hexaprenyl)benzoate + S-adenosyl-L-homocysteine + H(+). The enzyme catalyses a 3-demethylubiquinone + S-adenosyl-L-methionine = a ubiquinone + S-adenosyl-L-homocysteine. It carries out the reaction 3-demethylubiquinol-6 + S-adenosyl-L-methionine = ubiquinol-6 + S-adenosyl-L-homocysteine + H(+). Its pathway is cofactor biosynthesis; ubiquinone biosynthesis. Its activity is regulated as follows. Regulated in response to catabolite repression. In terms of biological role, O-methyltransferase required for two non-consecutive steps during ubiquinone biosynthesis. Catalyzes the 2 O-methylation of 3,4-dihydroxy-5-(all-trans-hexaprenyl)benzoic acid into 4-hydroxy-3-methoxy-5-(all-trans-hexaprenyl)benzoic acid. Also catalyzes the last step of ubiquinone biosynthesis by mediating methylation of 3-demethylubiquinone into ubiquinone. Also able to mediate the methylation of 3-demethylubiquinol-6 into ubiquinol-6. In Saccharomyces cerevisiae (strain ATCC 204508 / S288c) (Baker's yeast), this protein is Ubiquinone biosynthesis O-methyltransferase, mitochondrial.